A 146-amino-acid polypeptide reads, in one-letter code: MGRFIFVSFGLLVVFLSLSGTGADCPSGWSSYEGHCYKPFNEPKNWADAERFCKLQPKHSHLVSFQSAEEADFVVKLTRPRLKANLVWMGLSNIWHGCNWQWSDGARLNYKDWQEQSECLAFRGVHTEWLNMDCSSTCSFVCKFKA.

The first 23 residues, 1–23 (MGRFIFVSFGLLVVFLSLSGTGA), serve as a signal peptide directing secretion. 3 disulfides stabilise this stretch: cysteine 25-cysteine 36, cysteine 53-cysteine 142, and cysteine 119-cysteine 134. Positions 32 to 143 (YEGHCYKPFN…CSSTCSFVCK (112 aa)) constitute a C-type lectin domain.

It belongs to the snaclec family. Dimer (non-covalently linked) of heterodimers of subunits alpha and beta (disulfide-linked). As to expression, expressed by the venom gland.

It is found in the secreted. Functionally, elicits platelet aggregation by the binding to the C-type lectin domain family 1 member B (CLEC1B/CLEC2). Binding leads to tyrosine phosphorylation in the cytoplasmic tail of CLEC1B, which promotes the binding of spleen tyrosine kinase (Syk), subsequent activation of PLCgamma2, and platelet activation and aggregation. Binding to GPIbalpha (GP1BA) and alpha2/beta-1 (ITGA2/ITGB1) may also induce aggregation, but this is controversial. The polypeptide is Snaclec rhodocytin subunit beta (Calloselasma rhodostoma (Malayan pit viper)).